A 343-amino-acid polypeptide reads, in one-letter code: C5a anaphylatoxin chemotactic receptor 2 (343 aa).

Topologically, residues Met1 to Leu44 are extracellular. A glycan (N-linked (GlcNAc...) asparagine) is linked at Asn3. A helical transmembrane segment spans residues Leu45–Trp67. Residues Lys68 to Trp78 lie on the Cytoplasmic side of the membrane. Residues Phe79–Ala101 form a helical membrane-spanning segment. Over Gln102–Thr120 the chain is Extracellular. Cys113 and Cys192 are disulfide-bonded. Residues Val121 to Phe143 form a helical membrane-spanning segment. The Cytoplasmic portion of the chain corresponds to Arg144 to Cys155. The helical transmembrane segment at Gly156–Tyr178 threads the bilayer. The Extracellular portion of the chain corresponds to Arg179 to Thr208. Residues Val209 to Arg231 traverse the membrane as a helical segment. Residues Gln232–Ala243 are Cytoplasmic-facing. A helical membrane pass occupies residues Val244–Ser266. The Extracellular portion of the chain corresponds to Ser267 to Pro280. Residues Leu281–Phe300 form a helical membrane-spanning segment. Topologically, residues Gly301–Val343 are cytoplasmic. Residue Ser326 is modified to Phosphoserine.

Belongs to the G-protein coupled receptor 1 family. Interacts with C3 (the anaphylatoxin peptide C3a and the adipogenic hormone ASP); the interaction occurs with higher affinity for ASP, enhancing the phosphorylation and activation of GPR77, recruitment of ARRB2 to the cell surface and endocytosis of GRP77.

The protein resides in the cell membrane. Its function is as follows. Receptor for the chemotactic and inflammatory C3a, C4a and C5a anaphylatoxin peptides and also for their dearginated forms ASP/C3adesArg, C4adesArg and C5adesArg respectively. Couples weakly to G(i)-mediated signaling pathways. The chain is C5a anaphylatoxin chemotactic receptor 2 (C5ar2) from Rattus norvegicus (Rat).